The chain runs to 208 residues: Ribosomal RNA large subunit methyltransferase E (208 aa).

Residues Gly62, Trp64, Asp82, Asp98, and Asp123 each coordinate S-adenosyl-L-methionine. Lys163 acts as the Proton acceptor in catalysis.

Belongs to the class I-like SAM-binding methyltransferase superfamily. RNA methyltransferase RlmE family.

The protein localises to the cytoplasm. The enzyme catalyses uridine(2552) in 23S rRNA + S-adenosyl-L-methionine = 2'-O-methyluridine(2552) in 23S rRNA + S-adenosyl-L-homocysteine + H(+). Functionally, specifically methylates the uridine in position 2552 of 23S rRNA at the 2'-O position of the ribose in the fully assembled 50S ribosomal subunit. This chain is Ribosomal RNA large subunit methyltransferase E, found in Edwardsiella ictaluri (strain 93-146).